Here is a 120-residue protein sequence, read N- to C-terminus: NAD(P)H-quinone oxidoreductase subunit 3, chloroplastic (120 aa).

3 helical membrane-spanning segments follow: residues 2 to 22 (FLLY…VIPI), 64 to 84 (MFAL…PWAL), and 88 to 108 (ILGV…VLGL).

This sequence belongs to the complex I subunit 3 family. NDH is composed of at least 16 different subunits, 5 of which are encoded in the nucleus.

It localises to the plastid. Its subcellular location is the chloroplast thylakoid membrane. It catalyses the reaction a plastoquinone + NADH + (n+1) H(+)(in) = a plastoquinol + NAD(+) + n H(+)(out). It carries out the reaction a plastoquinone + NADPH + (n+1) H(+)(in) = a plastoquinol + NADP(+) + n H(+)(out). In terms of biological role, NDH shuttles electrons from NAD(P)H:plastoquinone, via FMN and iron-sulfur (Fe-S) centers, to quinones in the photosynthetic chain and possibly in a chloroplast respiratory chain. The immediate electron acceptor for the enzyme in this species is believed to be plastoquinone. Couples the redox reaction to proton translocation, and thus conserves the redox energy in a proton gradient. The chain is NAD(P)H-quinone oxidoreductase subunit 3, chloroplastic from Oenothera argillicola (Appalachian evening primrose).